Here is a 1469-residue protein sequence, read N- to C-terminus: ABC transporter G family member 36 (1469 aa).

Met-1 is subject to N-acetylmethionine. Residues Ser-37, Ser-38, and Ser-40 each carry the phosphoserine modification. A Phosphothreonine modification is found at Thr-43. Ser-45 is subject to Phosphoserine. Positions 171–444 constitute an ABC transporter 1 domain; it reads LGMIGIQFAK…FESFGFKCPE (274 aa). 204–211 contributes to the ATP binding site; that stretch reads GPPSSGKT. An ABC transmembrane type-2 1 domain is found at 522 to 735; it reads ELLKSCWDKE…AFNGLVVNEM (214 aa). The next 7 membrane-spanning stretches (helical) occupy residues 540 to 560, 575 to 595, 621 to 641, 659 to 679, 685 to 705, 713 to 733, and 772 to 792; these read FFYV…STLF, LYIG…FAEM, LPTF…WMVV, FLLV…IASV, IANT…GFLL, WWGW…LVVN, and ISVG…TLAL. Positions 806–852 are disordered; sequence PEEENEDADQGKDPMRRSLSTADGNRRGEVAMGRMSRDSAAEASGGA. 3 positions are modified to phosphoserine: Ser-825, Ser-841, and Ser-844. The segment covering 829–845 has biased composition (basic and acidic residues); it reads GNRRGEVAMGRMSRDSA. The region spanning 867-1119 is the ABC transporter 2 domain; the sequence is MSFDDVKYFV…KVVEYFESFP (253 aa). 912–919 contributes to the ATP binding site; sequence GVSGAGKT. An ABC transmembrane type-2 2 domain is found at 1192–1406; that stretch reads GQFKSCLWKQ…TVYGLIVSQY (215 aa). Helical transmembrane passes span 1216 to 1236, 1239 to 1259, 1299 to 1319, 1326 to 1346, 1356 to 1376, 1384 to 1404, and 1441 to 1461; these read FIFT…IGGN, NAGD…FVGI, LPYV…MVGF, FFWF…YGMM, VASI…GFFI, WWIW…LIVS, and PVAA…AFCI.

Belongs to the ABC transporter superfamily. ABCG family. PDR (TC 3.A.1.205) subfamily. As to quaternary structure, interacts, in a Ca(2+)-dependent manner, with calmodulins CaM3, CaM7 and several CaM-like proteins (CML8, CML9, CML12/CAL4, CML37 and CML38), as well as with calcium regulated proteins CBL4/SOS3 and KIC. Post-translationally, phosphorylated upon perception of pathogen-associated molecular patterns (PAMPs); phosphorylations at Ser-40 and Ser-45, which likely regulate transport activity, are required for plant defense against pathogens (e.g. Blumeria graminis), but dispensable for recruitment to the host-pathogen interface and penetration sites. Phosphorylation at Ser-841 seems to be required for protein stability. Ubiquitous (at protein level). Higher levels in root hairs, stomata, epidermal cells, and hydathodes. Concentrated at the infection site of infected plants, including papillae and haustoria. Accumulates at the periphery of lateral root cap and root epidermal cells, especially in the outer lateral membrane domain facing the environment.

The protein resides in the cell membrane. It localises to the golgi apparatus. Its subcellular location is the trans-Golgi network membrane. It is found in the endoplasmic reticulum membrane. In terms of biological role, together with ABCG37, regulates auxin homeostasis and responses by playing a dual role in coumarin (e.g. esculin) and in the auxin precursor indole 3-butyric acid (IBA) efflux transport, thus influencing cotyledons, roots and root hairs development. Mediates the transport (export into the apoplast) of distinct indole-type metabolites in distinct biological processes; a precursor of 4-O-beta-D-glucosyl-indol-3-yl formamide (4OGlcI3F), a pathogen-inducible tryptophan-derived compound (e.g. upon Blumeria graminis conidiospore inoculation), being a probable substrate in extracellular pathogen defense. Involved in the cellular detoxification of xenobiotics by promoting the excretion of some auxinic herbicides including 4-(2,4-dichlorophenoxy)butyric acid (2,4-DB) and other members of the phenoxyalkanoic acid family but not 2,4-dichlorophenoxyacetic acid (2,4-D). Mediates thymidine exudation in the rhizosphere. May be a transporter of lignin precursors during tracheary element differentiation. Key factor that controls the extent of cell death in the defense response. Necessary for both callose deposition and glucosinolate activation in response to pathogens. As a central component of nonhost resistance (NHR), required for limiting invasion by nonadapted pathogens including powdery mildews (e.g. Blumeria graminis and Erysiphe pisi), root-penetrating pathogenic fungi (e.g. Fusarium oxysporum), Phakopsora pachyrhizi and Colletotrichum gloeosporioides (anthracnose fungi), probably by sensing Ca(2+) via interactions with calmodulins (e.g. CaM7). Confers resistance to cadmium (Cd) and lead (Pb), probably as an efflux pump of Cd2+ or Cd conjugates, and possibly, of chemicals that mediate pathogen resistance. Promotes resistance to abiotic stresses (e.g. drought and salt stress) and favors general growth by preventing sodium accumulation in plants. Required for microbe-associated molecular patterns (MAMPs)- and salicylic acid (SA)-dependent hypersensitive cell death (HR), involving indole glucosinolate breakdown products (e.g. indole-3-acetonitrile), probably in a PEN2 myrosinase-dependent metabolic pathway, triggered by the recognition of effectors from incompatible pathogens including oomycetes and bacteria (e.g. AvrRpm1 and AvrRps4) and benzothiadiazole- (BTH), and leading to an induced protection against pathogens (e.g. Pseudomonas syringae pv. tomato DC3000, Golovinomyces orontii and Hyaloperonospora arabidopsidis). This chain is ABC transporter G family member 36, found in Arabidopsis thaliana (Mouse-ear cress).